The sequence spans 323 residues: Beta-ketoacyl-[acyl-carrier-protein] synthase III (323 aa).

Catalysis depends on residues cysteine 113 and histidine 250. The interval 251–255 (QANKR) is ACP-binding. Residue asparagine 280 is part of the active site.

This sequence belongs to the thiolase-like superfamily. FabH family. As to quaternary structure, homodimer.

The protein resides in the cytoplasm. It carries out the reaction malonyl-[ACP] + acetyl-CoA + H(+) = 3-oxobutanoyl-[ACP] + CO2 + CoA. The protein operates within lipid metabolism; fatty acid biosynthesis. In terms of biological role, catalyzes the condensation reaction of fatty acid synthesis by the addition to an acyl acceptor of two carbons from malonyl-ACP. Catalyzes the first condensation reaction which initiates fatty acid synthesis and may therefore play a role in governing the total rate of fatty acid production. Possesses both acetoacetyl-ACP synthase and acetyl transacylase activities. Its substrate specificity determines the biosynthesis of branched-chain and/or straight-chain of fatty acids. In Brucella suis (strain ATCC 23445 / NCTC 10510), this protein is Beta-ketoacyl-[acyl-carrier-protein] synthase III.